The following is a 141-amino-acid chain: Anthrone oxygenase ptaC (141 aa).

The N-terminal stretch at 1–19 (MMGLPLMAVPMLLDTGADP) is a signal peptide. 2 consecutive transmembrane segments (helical) span residues 33–53 (GVRTMPPLAITTFILYVWTII) and 64–84 (ILAVAAVVTMGMIPFTWYVLA).

The protein belongs to the anthrone oxygenase family.

The protein localises to the membrane. It functions in the pathway secondary metabolite biosynthesis. Functionally, anthrone oxygenase; part of the gene cluster that mediates the biosynthesis of pestheic acid, a diphenyl ether which is a biosynthetic precursor of the unique chloropupukeananes. The biosynthesis initiates from condensation of acetate and malonate units catalyzed by the non-reducing PKS ptaA. As the ptaA protein is TE/CLC domain-deficient, hydrolysis and Claisen cyclization of the polyketide could be catalyzed by ptaB containing a beta-lactamase domain. The ptaB protein might hydrolyze the thioester bond between the ACP of ptaA and the intermediate to release atrochrysone carboxylic acid, which is spontaneously dehydrated to form endocrocin anthrone. Endocrocin anthrone is then converted to endocrocin, catalyzed by the anthrone oxygenase ptaC. Spontaneous decarboxylation of endocrocin occurs to generate emodin. An O-methyltransferase (ptaH or ptaI) could methylate emodin to form physcion. PtaJ could then catalyze the oxidative cleavage of physcion, and rotation of the intermediate could then afford desmethylisosulochrin. PtaF, a putative NADH-dependent oxidoreductase, might also participate in the oxidative cleavage step. Desmethylisosulochrin is then transformed by another O-methyltransferase (ptaH or ptaI) to form isosulochrin. Chlorination of isosulochrin by ptaM in the cyclohexadienone B ring then produces chloroisosulochrin. PtaE is responsible for the oxidative coupling reactions of both benzophenones isosulochrin and chloroisosulochrin to RES-1214-1 and pestheic acid respectively, regardless of chlorination. The polypeptide is Anthrone oxygenase ptaC (Pestalotiopsis fici (strain W106-1 / CGMCC3.15140)).